A 428-amino-acid polypeptide reads, in one-letter code: Large envelope protein (428 aa).

A lipid anchor (N-myristoyl glycine; by host) is attached at Gly2. The tract at residues 2–145 is pre-S1; sequence GNNIKVTFDP…PPLRDTHPHL (144 aa). The interval 2–204 is pre-S; it reads GNNIKVTFDP…PLTIGDPVLS (203 aa). Residues 2–211 lie on the Virion surface; in external conformation side of the membrane; it reads GNNIKVTFDP…VLSTEMSPSG (210 aa). The Intravirion; in internal conformation segment spans residues 2–283; that stretch reads GNNIKVTFDP…NGFRWMYLRR (282 aa). An N-linked (GlcNAc...) asparagine glycan is attached at Asn3. Residues 110-144 form a disordered region; the sequence is RDIPRGIVPPQTPSNRDQRRKPTPLTPPLRDTHPH. A pre-S2 region spans residues 146–204; sequence TMKNQTGHLQGFAEGLRALTTSDHHNSAYGDPFTTLSPVVPTVSTTLSPPLTIGDPVLS. A helical transmembrane segment spans residues 212–232; it reads LLGLLAGLQVVYFLWTKILTI. Residues 233–283 lie on the Intravirion; in external conformation side of the membrane; sequence AQSLDWWWTSLSFPGGIPECTGQNLQFQTCKHLPTSCPPTCNGFRWMYLRR. The chain crosses the membrane as a helical span at residues 284–304; that stretch reads FIIYLLVLLLFLTFLLVLLDW. Over 305–376 the chain is Virion surface; it reads KGLLPVCPMM…WALARFSWLS (72 aa). N-linked (GlcNAc...) asparagine; by host glycosylation is present at Asn348. A helical transmembrane segment spans residues 377–397; that stretch reads LLVPLLQWLGGISLTVWLLLI. Topologically, residues 398-403 are intravirion; it reads WMIWFW. The helical transmembrane segment at 404–426 threads the bilayer; the sequence is GPVLMSILPPFIPIFALFFLIWA. The Virion surface segment spans residues 427 to 428; that stretch reads YI.

It belongs to the orthohepadnavirus major surface antigen family. As to quaternary structure, in its internal form (Li-HBsAg), interacts with the capsid protein and with the isoform S. Interacts with host chaperone CANX. Associates with host chaperone CANX through its pre-S2 N glycan; this association may be essential for isoform M proper secretion. In terms of assembly, interacts with isoform L. Interacts with the antigens of satellite virus HDV (HDVAgs); this interaction is required for encapsidation of HDV genomic RNA. In terms of processing, isoform M is N-terminally acetylated by host at a ratio of 90%, and N-glycosylated by host at the pre-S2 region. Post-translationally, myristoylated.

Its subcellular location is the virion membrane. In terms of biological role, the large envelope protein exists in two topological conformations, one which is termed 'external' or Le-HBsAg and the other 'internal' or Li-HBsAg. In its external conformation the protein attaches the virus to cell receptors and thereby initiating infection. This interaction determines the species specificity and liver tropism. This attachment induces virion internalization predominantly through caveolin-mediated endocytosis. The large envelope protein also assures fusion between virion membrane and endosomal membrane. In its internal conformation the protein plays a role in virion morphogenesis and mediates the contact with the nucleocapsid like a matrix protein. Functionally, the middle envelope protein plays an important role in the budding of the virion. It is involved in the induction of budding in a nucleocapsid independent way. In this process the majority of envelope proteins bud to form subviral lipoprotein particles of 22 nm of diameter that do not contain a nucleocapsid. In Ground squirrel hepatitis virus (strain 27) (GSHV), this protein is Large envelope protein.